The primary structure comprises 97 residues: Late transcription unit B protein (97 aa).

Residues 24 to 45 (SIEGETKKEHKHHYSTASKEKE) form a disordered region.

This is Late transcription unit B protein (ltuB) from Chlamydia trachomatis serovar D (strain ATCC VR-885 / DSM 19411 / UW-3/Cx).